The chain runs to 567 residues: Multidrug transporter TPO1_1 (567 aa).

The disordered stretch occupies residues 1–71 (MVEEISPKYT…NRRMSRILTG (71 aa)). Asn-120 carries an N-linked (GlcNAc...) asparagine glycan. Transmembrane regions (helical) follow at residues 128–148 (IICI…SIFA), 157–177 (IYHV…FGFA), 194–214 (GVLV…ATSK), 224–244 (FFGG…FADM), 253–273 (AICL…VMGS), 283–303 (WLEY…ALTF), 358–378 (PLLL…YLML), 396–416 (ELPY…LWYF), 436–456 (LIPM…FCWT), 471–491 (AGSF…NYII), 498–520 (AASA…PLFA), and 531–551 (WAGL…LFFL).

This sequence belongs to the major facilitator superfamily. DHA1 family. Polyamines/proton antiporter (TC 2.A.1.2.16) subfamily.

The protein resides in the cell membrane. Multidrug resistance transporter involved in resistance to azole antifungal drugs such as the imidazoles miconazole, ketoconazole, and tioconazole; as well as the triazoles itraconazole and fluconazole. Also plays a role in the resistance to other antifungal drug families such as the polyene amphotericin B, the pyrimide analog flucytosine, the fungicide mancozeb, and the polyamine spermine. Decreases the intracellular accumulation of clotrimazole by mediating its extrusion from cells. Involved in virulence by conferring resistance to the human antimicrobial peptide histatin-5. This chain is Multidrug transporter TPO1_1, found in Candida glabrata (strain ATCC 2001 / BCRC 20586 / JCM 3761 / NBRC 0622 / NRRL Y-65 / CBS 138) (Yeast).